The following is a 660-amino-acid chain: Solute carrier family 5 member 4B (660 aa).

At 1–27 (MASTLSPSITPQTEEPPVVPVRIQNAA) the chain is on the cytoplasmic side. The chain crosses the membrane as a helical span at residues 28–48 (DISVIVIYFIVVLAVGLWSMV). Topologically, residues 49 to 54 (RSNRGT) are extracellular. Residues 55-75 (VGGFFLAGHDMAWWPMGASLF) form a helical membrane-spanning segment. At 76–82 (ASNIGSN) the chain is on the cytoplasmic side. The helical transmembrane segment at 83–103 (HFVGLAGTGAASGIAIAAVEW) threads the bilayer. The Extracellular portion of the chain corresponds to 104-105 (NA). The helical transmembrane segment at 106-126 (LLMVLVLGWVFLPIYIKAGVL) threads the bilayer. Residues 127–142 (TMPEYLRKRFGGKRLQ) are Cytoplasmic-facing. The chain crosses the membrane as a helical span at residues 143 to 163 (IYLSVLSLFIMVALQTSSIIF). At 164–166 (SGA) the chain is on the extracellular side. A helical membrane pass occupies residues 167 to 187 (IFIQLALGLNLYLAVFILLAI). The Cytoplasmic portion of the chain corresponds to 188–208 (TAFYTVAGGLASVIYTDSVQT). Residues 209-229 (FIMLLGSLILMGFAFAEVGGY) form a helical membrane-spanning segment. Residues 230-277 (ESFTEKYMNAIPSVVEGDNLTISPKCYTPQPDSFHVFRDPVTGDIPWP) lie on the Extracellular side of the membrane. A helical transmembrane segment spans residues 278-298 (GLIFGMTILAIWYWCADQVIV). Residues 299–313 (QRCLCGKNMSHVKAA) are Cytoplasmic-facing. A helical transmembrane segment spans residues 314–334 (CILCGYLKLLPMFLMVMPGMI). Residues 335–380 (SRILYTDKVACVVPSECEKQCGTAVGCTNYAYPTLVLELMPDGLRG) lie on the Extracellular side of the membrane. The helical transmembrane segment at 381 to 401 (LMLSVMLASLMSSLTSIFNSA) threads the bilayer. The Cytoplasmic segment spans residues 402–423 (STLFTIDLYTKIRKKASERELM). Residues 424–444 (IAGRIFGMVLIAVSILWVPLV) form a helical membrane-spanning segment. The Extracellular portion of the chain corresponds to 445–455 (QVSQNGQLFHY). A helical membrane pass occupies residues 456–476 (IGSVSSYLGPPLGAVFMLAIF). The Cytoplasmic segment spans residues 477 to 484 (FKRVNEQG). Residues 485–505 (AFWGLMVGLVVGLIRLIAEFV) traverse the membrane as a helical segment. The Extracellular portion of the chain corresponds to 506-526 (YGTGSCVAPSNCPKIICGVHY). A helical membrane pass occupies residues 527–547 (MYFAIILFFVSIIVILGVSFL). Topologically, residues 548–639 (TEPIPDVHLY…DTSEKPLWRT (92 aa)) are cytoplasmic. A helical membrane pass occupies residues 640-660 (VMNINAVLLLGVAVFVHAYFA).

The protein belongs to the sodium:solute symporter (SSF) (TC 2.A.21) family. Expressed in small intestine. Expressed in kidney.

It is found in the cell membrane. It carries out the reaction D-glucose(out) + 2 Na(+)(out) = D-glucose(in) + 2 Na(+)(in). Its activity is regulated as follows. Inhibited by phlorizin. Its function is as follows. Low-affinity sodium/D-glucose symporter. Generates D-glucose-induced depolarization in a pH-independent manner. The sequence is that of Solute carrier family 5 member 4B from Mus musculus (Mouse).